The chain runs to 650 residues: DNA gyrase subunit B (650 aa).

The Toprim domain occupies 429–543 (NELFIVEGDS…AGYVYIAQPP (115 aa)). Residues glutamate 435, aspartate 508, and aspartate 510 each coordinate Mg(2+).

It belongs to the type II topoisomerase GyrB family. Heterotetramer, composed of two GyrA and two GyrB chains. In the heterotetramer, GyrA contains the active site tyrosine that forms a transient covalent intermediate with DNA, while GyrB binds cofactors and catalyzes ATP hydrolysis. Mg(2+) is required as a cofactor. Mn(2+) serves as cofactor. Requires Ca(2+) as cofactor.

The protein localises to the cytoplasm. The enzyme catalyses ATP-dependent breakage, passage and rejoining of double-stranded DNA.. A type II topoisomerase that negatively supercoils closed circular double-stranded (ds) DNA in an ATP-dependent manner to modulate DNA topology and maintain chromosomes in an underwound state. Negative supercoiling favors strand separation, and DNA replication, transcription, recombination and repair, all of which involve strand separation. Also able to catalyze the interconversion of other topological isomers of dsDNA rings, including catenanes and knotted rings. Type II topoisomerases break and join 2 DNA strands simultaneously in an ATP-dependent manner. The protein is DNA gyrase subunit B of Streptococcus pyogenes serotype M1.